The sequence spans 428 residues: Enolase 1 (428 aa).

Glutamine 167 lines the (2R)-2-phosphoglycerate pocket. Glutamate 209 serves as the catalytic Proton donor. Positions 246, 288, and 315 each coordinate Mg(2+). (2R)-2-phosphoglycerate is bound by residues lysine 340, arginine 369, serine 370, and lysine 391. Residue lysine 340 is the Proton acceptor of the active site.

It belongs to the enolase family. As to quaternary structure, component of the RNA degradosome, a multiprotein complex involved in RNA processing and mRNA degradation. Requires Mg(2+) as cofactor.

It localises to the cytoplasm. It is found in the secreted. The protein localises to the cell surface. The catalysed reaction is (2R)-2-phosphoglycerate = phosphoenolpyruvate + H2O. It functions in the pathway carbohydrate degradation; glycolysis; pyruvate from D-glyceraldehyde 3-phosphate: step 4/5. Its function is as follows. Catalyzes the reversible conversion of 2-phosphoglycerate (2-PG) into phosphoenolpyruvate (PEP). It is essential for the degradation of carbohydrates via glycolysis. The chain is Enolase 1 from Pseudomonas syringae pv. tomato (strain ATCC BAA-871 / DC3000).